A 390-amino-acid polypeptide reads, in one-letter code: MAALESFLYTSESVNEGHPDKICDQVSDAVLDACLEQDPDSKVACETCCKTGMVMVFGEITTKAKVDYEAIVRKVCKEIGFTSEDVGLDADKCKVLVHIEEQSPDIGQGVHGMGTKALEEIGAGDQGHMFGYATDETPELMPLTHVLATQLGYKLTEVRKNGVCPWLRPDGKTQVTVEYKREGGAMIPQRVHTILISTQHNPDVTNEKIREDLMEHVIKPVVPAKYLDDKTIFHLNPSGRFVIGGPHGDAGLTGRKIIIDTYGGWGAHGGGAFSGKDPTKVDRSGAYIARQAAKSVVASGLAKRCLVQVSYSIAVAEPLSVFVDTYGTGTMPDAEILKLIRKHFDFRPGLIGKNLDLKRGGNKRYQKTAAYGHFGRDDPDFTWETVKKLE.

Glu12 is a binding site for Mg(2+). Residue His18 coordinates ATP. Glu46 provides a ligand contact to K(+). Residues Glu59 and Gln102 each contribute to the L-methionine site. Residues Asp170–Lys172, Ser238–Phe241, Asp249, Arg255–Lys256, Ala272, Lys276, and Lys280 contribute to the ATP site. Position 249 (Asp249) interacts with L-methionine. Lys280 contacts L-methionine.

It belongs to the AdoMet synthase family. Homotetramer. It depends on Mn(2+) as a cofactor. Mg(2+) is required as a cofactor. Co(2+) serves as cofactor. Requires K(+) as cofactor.

The protein localises to the cytoplasm. It carries out the reaction L-methionine + ATP + H2O = S-adenosyl-L-methionine + phosphate + diphosphate. Its pathway is amino-acid biosynthesis; S-adenosyl-L-methionine biosynthesis; S-adenosyl-L-methionine from L-methionine: step 1/1. Its function is as follows. Catalyzes the formation of S-adenosylmethionine from methionine and ATP. The reaction comprises two steps that are both catalyzed by the same enzyme: formation of S-adenosylmethionine (AdoMet) and triphosphate, and subsequent hydrolysis of the triphosphate. This Chlamydomonas reinhardtii (Chlamydomonas smithii) protein is S-adenosylmethionine synthase (METM).